The chain runs to 356 residues: Carminomycin 4-O-methyltransferase DnrK (356 aa).

Arginine 153 is an S-adenosyl-L-methionine binding site. Aspartate 163 is a binding site for substrate. Residues glycine 187, glutamate 210, 237–238 (DF), and serine 252 contribute to the S-adenosyl-L-methionine site. Substrate is bound by residues asparagine 257 and arginine 303.

This sequence belongs to the class I-like SAM-binding methyltransferase superfamily. Cation-independent O-methyltransferase family. In terms of assembly, homodimer and homotetramer in equilibrium.

The catalysed reaction is carminomycin + S-adenosyl-L-methionine = daunorubicin + S-adenosyl-L-homocysteine + H(+). The protein operates within antibiotic biosynthesis; daunorubicin biosynthesis. It functions in the pathway antibiotic biosynthesis; carminomycin biosynthesis. Involved in the biosynthesis of the anthracyclines carminomycin and daunorubicin (daunomycin) which are aromatic polyketide antibiotics that exhibit high cytotoxicity and are widely applied in the chemotherapy of a variety of cancers. In vivo, catalyzes the transfer of a methyl group from S-adenosyl-L-methionine to the 4-O-position of carminomycin to form daunorubicin. In vitro, it also methylates the anthracyclines rhodomycin D (10-carbomethoxy-13-deoxycarminomycin) and 13-deoxy-carminomycin at the 4-hydroxyl position. It is quite specific with respect to the length of the carbohydrate chain at the C7 position, but it can accept substrates with bulky substituent at C10 position. This chain is Carminomycin 4-O-methyltransferase DnrK (dnrK), found in Streptomyces peucetius.